The following is an 885-amino-acid chain: Alanine--tRNA ligase (885 aa).

Zn(2+) is bound by residues H569, H573, C672, and H676.

The protein belongs to the class-II aminoacyl-tRNA synthetase family. It depends on Zn(2+) as a cofactor.

The protein resides in the cytoplasm. The enzyme catalyses tRNA(Ala) + L-alanine + ATP = L-alanyl-tRNA(Ala) + AMP + diphosphate. Catalyzes the attachment of alanine to tRNA(Ala) in a two-step reaction: alanine is first activated by ATP to form Ala-AMP and then transferred to the acceptor end of tRNA(Ala). Also edits incorrectly charged Ser-tRNA(Ala) and Gly-tRNA(Ala) via its editing domain. This chain is Alanine--tRNA ligase, found in Chlorobaculum tepidum (strain ATCC 49652 / DSM 12025 / NBRC 103806 / TLS) (Chlorobium tepidum).